The primary structure comprises 103 residues: Co-chaperonin GroES (103 aa).

Residues 31–67 form a disordered region; that stretch reads GGILLPDTAKEKPQVGEVAQVGPGKRNEDGSRQSPEV.

This sequence belongs to the GroES chaperonin family. As to quaternary structure, heptamer of 7 subunits arranged in a ring. Interacts with the chaperonin GroEL.

The protein localises to the cytoplasm. Functionally, together with the chaperonin GroEL, plays an essential role in assisting protein folding. The GroEL-GroES system forms a nano-cage that allows encapsulation of the non-native substrate proteins and provides a physical environment optimized to promote and accelerate protein folding. GroES binds to the apical surface of the GroEL ring, thereby capping the opening of the GroEL channel. This chain is Co-chaperonin GroES, found in Prochlorococcus marinus (strain NATL2A).